The sequence spans 231 residues: Chromosome partition protein MukE (231 aa).

Residues 211 to 231 (SLLADEEEQDYNEQAELEGEA) are disordered. A compositionally biased stretch (acidic residues) spans 214–231 (ADEEEQDYNEQAELEGEA).

It belongs to the MukE family. Interacts, and probably forms a ternary complex, with MukF and MukB. The complex formation is stimulated by calcium or magnesium.

The protein resides in the cytoplasm. The protein localises to the nucleoid. Involved in chromosome condensation, segregation and cell cycle progression. May participate in facilitating chromosome segregation by condensation DNA from both sides of a centrally located replisome during cell division. Probably acts via its interaction with MukB and MukF. The sequence is that of Chromosome partition protein MukE from Vibrio vulnificus (strain CMCP6).